The chain runs to 285 residues: 4-hydroxybenzoate octaprenyltransferase (285 aa).

7 helical membrane-spanning segments follow: residues 20–39 (GSYL…AQGL), 92–112 (ALGL…ALNW), 137–157 (FPQV…FMAV), 159–179 (EAVP…TVAY), 206–226 (YDRL…LGMG), 228–248 (YLGF…LFIH), and 260–280 (ACFS…LGIA).

It belongs to the UbiA prenyltransferase family. Requires Mg(2+) as cofactor.

The protein resides in the cell inner membrane. It carries out the reaction all-trans-octaprenyl diphosphate + 4-hydroxybenzoate = 4-hydroxy-3-(all-trans-octaprenyl)benzoate + diphosphate. It participates in cofactor biosynthesis; ubiquinone biosynthesis. Catalyzes the prenylation of para-hydroxybenzoate (PHB) with an all-trans polyprenyl group. Mediates the second step in the final reaction sequence of ubiquinone-8 (UQ-8) biosynthesis, which is the condensation of the polyisoprenoid side chain with PHB, generating the first membrane-bound Q intermediate 3-octaprenyl-4-hydroxybenzoate. This is 4-hydroxybenzoate octaprenyltransferase from Pseudoalteromonas atlantica (strain T6c / ATCC BAA-1087).